The following is a 495-amino-acid chain: Cytochrome P450 monooxygenase 64 (495 aa).

The helical transmembrane segment at 2 to 22 threads the bilayer; that stretch reads FLQIVTSVLATGLLYALISVL. N-linked (GlcNAc...) asparagine glycans are attached at residues N25 and N198. C428 contacts heme.

Belongs to the cytochrome P450 family. It depends on heme as a cofactor.

The protein resides in the membrane. Its pathway is secondary metabolite biosynthesis. Cytochrome P450 monooxygenase that is able to use 4-ethoxybenzoic acid as a substrate for oxidation. This is Cytochrome P450 monooxygenase 64 from Postia placenta (strain ATCC 44394 / Madison 698-R) (Brown rot fungus).